A 200-amino-acid polypeptide reads, in one-letter code: GMP synthase [glutamine-hydrolyzing] subunit A (200 aa).

The Glutamine amidotransferase type-1 domain occupies 3–193 (KIYVVDNGGQ…IGICASYREI (191 aa)). Residue Cys80 is the Nucleophile of the active site. Active-site residues include His167 and Glu169.

Heterodimer composed of a glutamine amidotransferase subunit (A) and a GMP-binding subunit (B).

It carries out the reaction XMP + L-glutamine + ATP + H2O = GMP + L-glutamate + AMP + diphosphate + 2 H(+). The protein operates within purine metabolism; GMP biosynthesis; GMP from XMP (L-Gln route): step 1/1. Catalyzes the synthesis of GMP from XMP. The protein is GMP synthase [glutamine-hydrolyzing] subunit A of Thermoplasma acidophilum (strain ATCC 25905 / DSM 1728 / JCM 9062 / NBRC 15155 / AMRC-C165).